The following is a 459-amino-acid chain: ATP synthase subunit beta (459 aa).

149–156 (GGAGVGKT) is a binding site for ATP.

The protein belongs to the ATPase alpha/beta chains family. As to quaternary structure, F-type ATPases have 2 components, CF(1) - the catalytic core - and CF(0) - the membrane proton channel. CF(1) has five subunits: alpha(3), beta(3), gamma(1), delta(1), epsilon(1). CF(0) has three main subunits: a(1), b(2) and c(9-12). The alpha and beta chains form an alternating ring which encloses part of the gamma chain. CF(1) is attached to CF(0) by a central stalk formed by the gamma and epsilon chains, while a peripheral stalk is formed by the delta and b chains.

Its subcellular location is the cell inner membrane. It carries out the reaction ATP + H2O + 4 H(+)(in) = ADP + phosphate + 5 H(+)(out). In terms of biological role, produces ATP from ADP in the presence of a proton gradient across the membrane. The catalytic sites are hosted primarily by the beta subunits. The polypeptide is ATP synthase subunit beta (Pseudomonas syringae pv. tomato (strain ATCC BAA-871 / DC3000)).